The chain runs to 89 residues: Small ribosomal subunit protein uS14A (89 aa).

It belongs to the universal ribosomal protein uS14 family. In terms of assembly, part of the 30S ribosomal subunit. Contacts proteins S3 and S10.

In terms of biological role, binds 16S rRNA, required for the assembly of 30S particles and may also be responsible for determining the conformation of the 16S rRNA at the A site. This is Small ribosomal subunit protein uS14A from Listeria monocytogenes serotype 4b (strain F2365).